Reading from the N-terminus, the 1173-residue chain is PR domain zinc finger protein 10 (1173 aa).

The segment at R146–N211 is disordered. Residues D154–A167 are compositionally biased toward polar residues. A compositionally biased stretch (acidic residues) spans K172–A202. An SET domain is found at L248 to A366. The interval I267 to E371 is N-terminal PR domain; essential for transcriptional activator activity. The segment at W395 to H417 adopts a C2H2-type 1 zinc-finger fold. Residues R430 to R447 are compositionally biased toward basic residues. The interval R430–F451 is disordered. C2H2-type zinc fingers lie at residues F559–H581, L589–H611, Y617–H639, F645–H668, Y673–H695, F701–H724, F756–H779, Y801–H824, and V863–H886. The C-terminal glutamine-rich region; essential for transcriptional activator activity stretch occupies residues Q926 to Q1153. Disordered regions lie at residues P1014 to A1056 and K1125 to P1173. Over residues Q1150–T1160 the composition is skewed to low complexity. Positions N1161–P1173 are enriched in polar residues.

It belongs to the class V-like SAM-binding methyltransferase superfamily.

The protein localises to the nucleus. Functionally, transcriptional activator, essential for early embryonic development and survival of embryonic stem cells (ESCs). Supports cell growth and survival during early development by transcriptionally activating the expression of the translation initiation factor EIF3B, to sustain global translation. Activates the transcription of FLNC. This chain is PR domain zinc finger protein 10 (prdm10), found in Xenopus tropicalis (Western clawed frog).